The chain runs to 199 residues: Recombination protein RecR (199 aa).

A C4-type zinc finger spans residues 56–71 (CSICFNVSQDDQCRIC). In terms of domain architecture, Toprim spans 79–174 (SVLCVVEEYK…RVTRLASGLP (96 aa)).

This sequence belongs to the RecR family.

Its function is as follows. May play a role in DNA repair. It seems to be involved in an RecBC-independent recombinational process of DNA repair. It may act with RecF and RecO. The chain is Recombination protein RecR from Nocardioides sp. (strain ATCC BAA-499 / JS614).